The chain runs to 647 residues: Zinc finger CCCH domain-containing protein 19 (647 aa).

2 C3H1-type zinc fingers span residues 16 to 45 and 47 to 73; these read RRRS…HSDA and RMNP…HPPL. Residues 78–106 are disordered; that stretch reads GAPTTPRTSQQSAPQVSVPAQAPVPNPAS. Residues 86-106 are compositionally biased toward low complexity; sequence SQQSAPQVSVPAQAPVPNPAS. The C3H1-type 3 zinc finger occupies 109-136; that stretch reads AKQGVPCYYFQKGMCVKGDRCAFLHLPQ. 5 disordered regions span residues 155 to 280, 308 to 327, 335 to 452, 512 to 580, and 586 to 605; these read VPHP…RTNG, LSES…DSSD, QRRL…DAES, LKRK…LSPA, and EAAD…ETAE. 2 stretches are compositionally biased toward polar residues: residues 160–175 and 189–203; these read LKNS…QQNA and NGKT…NRAG. The segment covering 267-280 has biased composition (basic and acidic residues); that stretch reads SLREDRGAYRRTNG. Positions 347–359 are enriched in basic and acidic residues; it reads SDRHNVYPEDERH. Positions 369-379 are enriched in polar residues; sequence QASNDGVSSSR. The span at 419 to 433 shows a compositional bias: basic and acidic residues; it reads LRGKLHDRLKAKPNE. Polar residues predominate over residues 435–445; that stretch reads VSGNVQSSLSK. Residues 527–536 show a composition bias toward basic and acidic residues; it reads GSKREEHSGG.

The sequence is that of Zinc finger CCCH domain-containing protein 19 from Oryza sativa subsp. japonica (Rice).